A 246-amino-acid polypeptide reads, in one-letter code: Neurotrophic factor BDNF precursor form (246 aa).

The signal sequence occupies residues 1 to 18 (MTILFLTMVISYLSCMKA). The propeptide occupies 19-127 (TPMKEVSIRG…AANMSMRVRR (109 aa)). N-linked (GlcNAc...) asparagine glycosylation is present at Asn120. 3 disulfides stabilise this stretch: Cys140/Cys207, Cys185/Cys236, and Cys195/Cys238.

Belongs to the NGF-beta family.

The protein localises to the secreted. Promotes the survival of neuronal populations that are all located either in the central nervous system or directly connected to it. The protein is Neurotrophic factor BDNF precursor form (BDNF) of Ptyas major (Chinese green snake).